A 356-amino-acid chain; its full sequence is Protein RecA (356 aa).

An ATP-binding site is contributed by 68-75 (GPESSGKT).

This sequence belongs to the RecA family.

It is found in the cytoplasm. Functionally, can catalyze the hydrolysis of ATP in the presence of single-stranded DNA, the ATP-dependent uptake of single-stranded DNA by duplex DNA, and the ATP-dependent hybridization of homologous single-stranded DNAs. It interacts with LexA causing its activation and leading to its autocatalytic cleavage. In Clostridium botulinum (strain Alaska E43 / Type E3), this protein is Protein RecA.